Reading from the N-terminus, the 97-residue chain is MKLRPLHDRVVIRRSEEESKTAGGIVLPGSAAEKPNRGEIVAVGTGRILENGEVRALAVKVGDKVVFGPYSGSNTVKVDGEDLLVMAENEILAVIEG.

It belongs to the GroES chaperonin family. Heptamer of 7 subunits arranged in a ring. Interacts with the chaperonin GroEL.

The protein localises to the cytoplasm. Its function is as follows. Together with the chaperonin GroEL, plays an essential role in assisting protein folding. The GroEL-GroES system forms a nano-cage that allows encapsulation of the non-native substrate proteins and provides a physical environment optimized to promote and accelerate protein folding. GroES binds to the apical surface of the GroEL ring, thereby capping the opening of the GroEL channel. This Pseudomonas putida (Arthrobacter siderocapsulatus) protein is Co-chaperonin GroES.